We begin with the raw amino-acid sequence, 79 residues long: uncharacterized protein (79 aa).

Positions 51 to 79 (PAQFPKVQRPPTLLGGKNTSTQTTLHPVI) are disordered. Residues 67-79 (KNTSTQTTLHPVI) are compositionally biased toward polar residues.

This is an uncharacterized protein from Homo sapiens (Human).